The chain runs to 462 residues: Protoheme IX farnesyltransferase, mitochondrial (462 aa).

The N-terminal 30 residues, 1-30 (MSYFPRTYAHLMRNVLAHNKGNIYLQIGTQ), are a transit peptide targeting the mitochondrion. Helical transmembrane passes span 158–178 (TILVMLSAICSYALSPYPASV), 234–254 (LIGTLGVSILYFGVNPTVAIL), 274–294 (IINTWLGALVGMVPPLMGWAA), 298–318 (LSHPGSWCLAGLLFAWQFPHF), 352–372 (YSILMFPLCFGLSYFNITDWY), 373–393 (YQIDSGLINAWLTFWAFKFYW), and 425–445 (FMASVLHLPAILILAIIHKKG).

This sequence belongs to the UbiA prenyltransferase family. As to quaternary structure, forms ~370 kDa homooligomeric complexes.

The protein localises to the mitochondrion. It localises to the mitochondrion membrane. It carries out the reaction heme b + (2E,6E)-farnesyl diphosphate + H2O = Fe(II)-heme o + diphosphate. It functions in the pathway porphyrin-containing compound metabolism; heme O biosynthesis; heme O from protoheme: step 1/1. Its activity is regulated as follows. Positively regulated by the hydroxylated intermediate (heme I) formed at the subsequent step, or by HAS/COX15 itself. Catalyzes the first reaction in the biosynthesis of heme A, a prosthetic group of mitochondrial cytochrome c oxidase (CcO). Heme A is synthesized from heme B by two sequential enzymatic reactions catalyzed by heme O synthase (HOS/COX10) and heme A synthase (HAS/COX15). HOS converts heme B (protoheme IX) to heme O by substitution of the vinyl group on carbon 2 of heme B porphyrin ring with a hydroxyethyl farnesyl side group. The polypeptide is Protoheme IX farnesyltransferase, mitochondrial (COX10) (Saccharomyces cerevisiae (strain ATCC 204508 / S288c) (Baker's yeast)).